The primary structure comprises 337 residues: Probable dual-specificity RNA methyltransferase RlmN (337 aa).

Glutamate 88 functions as the Proton acceptor in the catalytic mechanism. In terms of domain architecture, Radical SAM core spans 94-322 (SSDRLTVCVS…ASIRRSRGLD (229 aa)). An intrachain disulfide couples cysteine 101 to cysteine 327. The [4Fe-4S] cluster site is built by cysteine 108, cysteine 112, and cysteine 115. Residues 155-156 (GE), serine 185, 208-210 (SLH), and asparagine 284 contribute to the S-adenosyl-L-methionine site. Cysteine 327 functions as the S-methylcysteine intermediate in the catalytic mechanism.

This sequence belongs to the radical SAM superfamily. RlmN family. Requires [4Fe-4S] cluster as cofactor.

The protein resides in the cytoplasm. The enzyme catalyses adenosine(2503) in 23S rRNA + 2 reduced [2Fe-2S]-[ferredoxin] + 2 S-adenosyl-L-methionine = 2-methyladenosine(2503) in 23S rRNA + 5'-deoxyadenosine + L-methionine + 2 oxidized [2Fe-2S]-[ferredoxin] + S-adenosyl-L-homocysteine. The catalysed reaction is adenosine(37) in tRNA + 2 reduced [2Fe-2S]-[ferredoxin] + 2 S-adenosyl-L-methionine = 2-methyladenosine(37) in tRNA + 5'-deoxyadenosine + L-methionine + 2 oxidized [2Fe-2S]-[ferredoxin] + S-adenosyl-L-homocysteine. Its function is as follows. Specifically methylates position 2 of adenine 2503 in 23S rRNA and position 2 of adenine 37 in tRNAs. This Thermosynechococcus vestitus (strain NIES-2133 / IAM M-273 / BP-1) protein is Probable dual-specificity RNA methyltransferase RlmN.